A 149-amino-acid polypeptide reads, in one-letter code: Arginine repressor (149 aa).

This sequence belongs to the ArgR family.

It is found in the cytoplasm. Its pathway is amino-acid biosynthesis; L-arginine biosynthesis [regulation]. Regulates arginine biosynthesis genes. In Shouchella clausii (strain KSM-K16) (Alkalihalobacillus clausii), this protein is Arginine repressor.